The chain runs to 259 residues: Adenosylcobinamide-GDP ribazoletransferase (259 aa).

The next 7 helical transmembrane spans lie at 41–61 (AAIW…AIVF), 67–87 (FGLA…IATG), 119–139 (IGAY…NVLS), 148–168 (LFAL…FMHL), 179–199 (AGAG…GAIP), 200–220 (LLLL…LLFA), and 237–257 (TIGA…SVAL).

This sequence belongs to the CobS family. The cofactor is Mg(2+).

The protein resides in the cell inner membrane. It carries out the reaction alpha-ribazole + adenosylcob(III)inamide-GDP = adenosylcob(III)alamin + GMP + H(+). The enzyme catalyses alpha-ribazole 5'-phosphate + adenosylcob(III)inamide-GDP = adenosylcob(III)alamin 5'-phosphate + GMP + H(+). Its pathway is cofactor biosynthesis; adenosylcobalamin biosynthesis; adenosylcobalamin from cob(II)yrinate a,c-diamide: step 7/7. In terms of biological role, joins adenosylcobinamide-GDP and alpha-ribazole to generate adenosylcobalamin (Ado-cobalamin). Also synthesizes adenosylcobalamin 5'-phosphate from adenosylcobinamide-GDP and alpha-ribazole 5'-phosphate. The polypeptide is Adenosylcobinamide-GDP ribazoletransferase (Mesorhizobium japonicum (strain LMG 29417 / CECT 9101 / MAFF 303099) (Mesorhizobium loti (strain MAFF 303099))).